Reading from the N-terminus, the 657-residue chain is Translation factor GUF1, mitochondrial (657 aa).

The N-terminal 39 residues, 1-39, are a transit peptide targeting the mitochondrion; it reads MRGCLQSVKWLTSALRPSQSLASSTRYPRRLLSTSAPRN. In terms of domain architecture, tr-type G spans 59–239; that stretch reads ERFRNFCIVA…TVIEQIPAPV (181 aa). GTP-binding positions include 121–128, 185–189, and 239–242; these read HQGEDYLL, INKVD, and VGDR.

It belongs to the TRAFAC class translation factor GTPase superfamily. Classic translation factor GTPase family. LepA subfamily.

The protein resides in the mitochondrion inner membrane. It catalyses the reaction GTP + H2O = GDP + phosphate + H(+). In terms of biological role, promotes mitochondrial protein synthesis. May act as a fidelity factor of the translation reaction, by catalyzing a one-codon backward translocation of tRNAs on improperly translocated ribosomes. Binds to mitochondrial ribosomes in a GTP-dependent manner. This is Translation factor GUF1, mitochondrial from Ajellomyces capsulatus (strain H143) (Darling's disease fungus).